The primary structure comprises 107 residues: Phosphoribosyl-ATP pyrophosphatase (107 aa).

It belongs to the PRA-PH family.

It localises to the cytoplasm. The enzyme catalyses 1-(5-phospho-beta-D-ribosyl)-ATP + H2O = 1-(5-phospho-beta-D-ribosyl)-5'-AMP + diphosphate + H(+). Its pathway is amino-acid biosynthesis; L-histidine biosynthesis; L-histidine from 5-phospho-alpha-D-ribose 1-diphosphate: step 2/9. The protein is Phosphoribosyl-ATP pyrophosphatase of Novosphingobium aromaticivorans (strain ATCC 700278 / DSM 12444 / CCUG 56034 / CIP 105152 / NBRC 16084 / F199).